A 787-amino-acid chain; its full sequence is Protein translocase subunit SecA 2 (787 aa).

ATP is bound by residues glutamine 86, glycine 104–threonine 108, and aspartate 493.

Belongs to the SecA family. As to quaternary structure, monomer and homodimer. Part of the essential Sec protein translocation apparatus which comprises SecA, SecYEG and auxiliary proteins SecDF. Other proteins may also be involved.

Its subcellular location is the cell membrane. It is found in the cytoplasm. The catalysed reaction is ATP + H2O + cellular proteinSide 1 = ADP + phosphate + cellular proteinSide 2.. Functionally, part of the Sec protein translocase complex. Interacts with the SecYEG preprotein conducting channel. Has a central role in coupling the hydrolysis of ATP to the transfer of proteins into and across the cell membrane, serving as an ATP-driven molecular motor driving the stepwise translocation of polypeptide chains across the membrane. The protein is Protein translocase subunit SecA 2 of Bacillus thuringiensis subsp. konkukian (strain 97-27).